A 635-amino-acid chain; its full sequence is Biosynthetic arginine decarboxylase (635 aa).

K100 carries the N6-(pyridoxal phosphate)lysine modification. Residue 282-292 (IDIGGGLGVDY) coordinates substrate.

This sequence belongs to the Orn/Lys/Arg decarboxylase class-II family. SpeA subfamily. Requires Mg(2+) as cofactor. Pyridoxal 5'-phosphate is required as a cofactor.

It carries out the reaction L-arginine + H(+) = agmatine + CO2. Its pathway is amine and polyamine biosynthesis; agmatine biosynthesis; agmatine from L-arginine: step 1/1. Its function is as follows. Catalyzes the biosynthesis of agmatine from arginine. The chain is Biosynthetic arginine decarboxylase from Pelobacter propionicus (strain DSM 2379 / NBRC 103807 / OttBd1).